A 69-amino-acid polypeptide reads, in one-letter code: uncharacterized protein (69 aa).

Positions 1 to 21 are cleaved as a signal peptide; that stretch reads MNTKFILILLVLIISTIFVNS.

It is found in the secreted. This is an uncharacterized protein from Dictyostelium discoideum (Social amoeba).